Reading from the N-terminus, the 608-residue chain is Formate hydrogenlyase subunit 3 (608 aa).

The next 12 membrane-spanning stretches (helical) occupy residues 10-26 (GVAWFVAAAVLAFLFSF), 44-67 (LYTAAAGFTVLTGAVGVSGALSLV), 76-93 (LNAIWLITLGLCGLFVSL), 116-140 (AAAVCAVIASNLGMFVVMAEIMALC), 153-173 (LWFALGRLGTLLLAIACWLLW), 197-218 (IWLLGVIGFGLLAGIIPLHGWV), 229-251 (AAALFSTVVMKIGLLGILTLSLL), 258-280 (WWGIALLVLGMITAFVGGLYALV), 296-312 (IGIILLGLGAGVTGIAL), 416-440 (LAVGLAITGALAVMCMAKVYGVTFL), 453-476 (CAPLLMSVSVVALAICCVIGGVAA), and 502-521 (MITLLLIACPLLPFIIMAIC).

The protein belongs to the complex I subunit 4 family. In terms of assembly, FHL comprises of a formate dehydrogenase, unidentified electron carriers and a hydrogenase (isoenzyme 3). In this non-energy conserving pathway molecular hydrogen and carbodioxide from formate are released.

The protein localises to the cell inner membrane. The chain is Formate hydrogenlyase subunit 3 (hycC) from Escherichia coli (strain K12).